We begin with the raw amino-acid sequence, 1158 residues long: Formin-C (1158 aa).

Disordered stretches follow at residues 8–29 (INGN…PSVS), 417–523 (PNTS…LSCL), and 990–1052 (INNN…NNSQ). The GBD/FH3 domain occupies 20 to 388 (QQPQQNPSVS…EYSQRKLEMI (369 aa)). Residues 417–437 (PNTSDLFDSSTLEDTYDGNND) show a composition bias toward polar residues. Residues 438 to 481 (TNSCTSISTSSTPIHISQPTTLIVPSTTPNHPPQQSQQTPPLQL) are compositionally biased toward low complexity. Residues 479 to 515 (LQLQKEKEKEKEKEKEKEKEKEKEQQQQQQQSNKQST) adopt a coiled-coil conformation. Basic and acidic residues predominate over residues 482 to 503 (QKEKEKEKEKEKEKEKEKEKEQ). One can recognise an FH2 domain in the interval 601–998 (TKSPITPSKR…IINNNNNNNN (398 aa)). The DAD domain occupies 1134–1158 (SDDPMAVIIEALKTGSPNDMVKRAF).

It belongs to the formin homology family. Diaphanous subfamily. In terms of assembly, interacts (via GBD/FH3 domain) with activated Rho-GTPases.

It localises to the cytoplasm. The protein localises to the cytosol. Its subcellular location is the cytoskeleton. Formins play an important role in the nucleation of actin and the formation of linear actin filaments. The polypeptide is Formin-C (forC) (Dictyostelium discoideum (Social amoeba)).